Here is a 497-residue protein sequence, read N- to C-terminus: uncharacterized protein (497 aa).

The span at 44–74 (IRQEKEMKRHDDDGRQYQSDRKFAKSKHDDI) shows a compositional bias: basic and acidic residues. Disordered stretches follow at residues 44 to 95 (IRQE…SVGR), 120 to 151 (VSRS…EHRD), and 195 to 227 (GNVI…TSAR). The segment covering 120-131 (VSRSSSIGHSGS) has biased composition (low complexity). Ser-123, Ser-125, and Ser-131 each carry phosphoserine. Thr-132 is subject to Phosphothreonine. The span at 213–227 (ASLSRAASNSSTSAR) shows a compositional bias: low complexity. Thr-258 is modified (phosphothreonine). Ser-310 is modified (phosphoserine). Polar residues predominate over residues 367–385 (NVNPSNQDLASVKQPSGFS). The tract at residues 367-497 (NVNPSNQDLA…GFPDTSRPPH (131 aa)) is disordered. Residues 400–409 (NFSNDDSSFF) show a composition bias toward low complexity. Ser-436 is subject to Phosphoserine. A compositionally biased stretch (low complexity) spans 448–472 (GLSSGASIPSAPPGFGYQQPSFPYS).

It localises to the cytoplasm. The protein resides in the nucleus. This is an uncharacterized protein from Schizosaccharomyces pombe (strain 972 / ATCC 24843) (Fission yeast).